A 335-amino-acid polypeptide reads, in one-letter code: MSASSQPVLVADIGGTNARFALADTSLDAPLQQDSIREYAVAEFPSLGDAARHHLEQIGATASRGVFAVAGRVDGDEARITNHPWVISRSRTAAMLGFDELHLINDFAAQAMAISLLQSDDVVQVGGAAWVPGKPGQPRNYAVIGPGTGLGVGGLILRHGRCYPLETEGGHVSFPPGTPEEIRILEILSEQFGRVSNERLICGPGLVNIHRAVCEMAGIDPGQLQPVDVTARALHGDPQAMRTVDVFCAVFGAIAGDLVLTQGAWDGVFLTGGLTPKMLDSLQHSGFRQRFEHKGRFSSIMARVPSLAVMHPHAGLLGAAAYAADAERDAPGVAA.

An ATP-binding site is contributed by 11-16 (ADIGGT).

The protein belongs to the bacterial glucokinase family.

Its subcellular location is the cytoplasm. It catalyses the reaction D-glucose + ATP = D-glucose 6-phosphate + ADP + H(+). The chain is Glucokinase from Stenotrophomonas maltophilia (strain R551-3).